Here is a 294-residue protein sequence, read N- to C-terminus: Nucleotide-binding protein NT01CX_1284 (294 aa).

8–15 (GLSGAGKS) lines the ATP pocket. 59-62 (DIRG) contributes to the GTP binding site.

Belongs to the RapZ-like family.

Its function is as follows. Displays ATPase and GTPase activities. The sequence is that of Nucleotide-binding protein NT01CX_1284 from Clostridium novyi (strain NT).